The sequence spans 370 residues: 3,5-dihydroxyphenylacetyl-CoA synthase (370 aa).

The active site involves cysteine 158.

It belongs to the thiolase-like superfamily. Chalcone/stilbene synthases family.

It catalyses the reaction 4 malonyl-CoA + 4 H(+) = (3,5-dihydroxyphenyl)acetyl-CoA + 4 CO2 + 3 CoA + H2O. It functions in the pathway antibiotic biosynthesis; vancomycin biosynthesis. Its function is as follows. Involved in the biosynthesis of the nonproteinogenic amino acid monomer (S)-3,5-dihydroxyphenylglycine (Dpg) responsible of the production of vancomycin and teicoplanin antibiotics. Catalyzes the Claisen condensation of four molecules of malonyl-CoA to yield 3,5-dihydroxyphenylacetyl-CoA (DPA-CoA) and three free coenzyme A (CoA). DpgA requires the presence of the dehydratases DpgB and DpgD to facilitate the aromatization of the DPA-S-DgpA or DPA-S-CoA intermediate. The chain is 3,5-dihydroxyphenylacetyl-CoA synthase (dpgA) from Amycolatopsis orientalis (Nocardia orientalis).